Reading from the N-terminus, the 410-residue chain is Retrovirus-related Pol polyprotein from type-1 retrotransposable element R1 2 (410 aa).

The Reverse transcriptase domain occupies 1–118; sequence GCPQGSIGGP…SCFRYLGVNV (118 aa). Residues 254-410 form a nucleic acid-binding endonuclease region; sequence SSVIKLERLV…RLNLELDVNG (157 aa).

It catalyses the reaction DNA(n) + a 2'-deoxyribonucleoside 5'-triphosphate = DNA(n+1) + diphosphate. The sequence is that of Retrovirus-related Pol polyprotein from type-1 retrotransposable element R1 2 from Nasonia vitripennis (Parasitic wasp).